The sequence spans 269 residues: Shikimate dehydrogenase (NADP(+)) (269 aa).

Residues 14 to 16 (SKS) and threonine 61 contribute to the shikimate site. The active-site Proton acceptor is the lysine 65. Glutamate 77 is a binding site for NADP(+). Residues asparagine 86 and aspartate 102 each coordinate shikimate. Residues 126 to 130 (GAGGA), 149 to 154 (NRTLSK), and methionine 213 contribute to the NADP(+) site. Residue tyrosine 215 coordinates shikimate. An NADP(+)-binding site is contributed by glycine 238.

It belongs to the shikimate dehydrogenase family. Homodimer.

The enzyme catalyses shikimate + NADP(+) = 3-dehydroshikimate + NADPH + H(+). It participates in metabolic intermediate biosynthesis; chorismate biosynthesis; chorismate from D-erythrose 4-phosphate and phosphoenolpyruvate: step 4/7. Functionally, involved in the biosynthesis of the chorismate, which leads to the biosynthesis of aromatic amino acids. Catalyzes the reversible NADPH linked reduction of 3-dehydroshikimate (DHSA) to yield shikimate (SA). The sequence is that of Shikimate dehydrogenase (NADP(+)) from Pasteurella multocida (strain Pm70).